We begin with the raw amino-acid sequence, 243 residues long: Small ribosomal subunit protein uS3 (243 aa).

Residues 22–93 (LNEFLTRELA…SVELYAEKVA (72 aa)) enclose the KH type-2 domain. The disordered stretch occupies residues 195 to 243 (QQGKNGPKKPQPDHILVTEPKDEPAPLEPTSDIRSLAPAPLPQPVAAVA).

The protein belongs to the universal ribosomal protein uS3 family.

This is Small ribosomal subunit protein uS3 (RpS3) from Manduca sexta (Tobacco hawkmoth).